Reading from the N-terminus, the 102-residue chain is uncharacterized protein (102 aa).

The signal sequence occupies residues methionine 1–alanine 41.

This is an uncharacterized protein from Saccharomyces cerevisiae (strain ATCC 204508 / S288c) (Baker's yeast).